The following is a 206-amino-acid chain: ATP phosphoribosyltransferase (206 aa).

It belongs to the ATP phosphoribosyltransferase family. Short subfamily. In terms of assembly, heteromultimer composed of HisG and HisZ subunits.

It localises to the cytoplasm. It carries out the reaction 1-(5-phospho-beta-D-ribosyl)-ATP + diphosphate = 5-phospho-alpha-D-ribose 1-diphosphate + ATP. Its pathway is amino-acid biosynthesis; L-histidine biosynthesis; L-histidine from 5-phospho-alpha-D-ribose 1-diphosphate: step 1/9. Catalyzes the condensation of ATP and 5-phosphoribose 1-diphosphate to form N'-(5'-phosphoribosyl)-ATP (PR-ATP). Has a crucial role in the pathway because the rate of histidine biosynthesis seems to be controlled primarily by regulation of HisG enzymatic activity. The protein is ATP phosphoribosyltransferase of Brachyspira hyodysenteriae (strain ATCC 49526 / WA1).